The sequence spans 292 residues: Phosphoenolpyruvate guanylyltransferase (292 aa).

Threonine 168, glycine 184, and serine 187 together coordinate phosphoenolpyruvate. The segment at 243-292 (PLVAEDSGGSGGESGTSAESGLSVPPGIVGGTQRRIVSDASGPGRAKKYP) is disordered.

The protein belongs to the CofC family.

It carries out the reaction phosphoenolpyruvate + GTP + H(+) = enolpyruvoyl-2-diphospho-5'-guanosine + diphosphate. It participates in cofactor biosynthesis; coenzyme F420 biosynthesis. Functionally, guanylyltransferase that catalyzes the activation of phosphoenolpyruvate (PEP) as enolpyruvoyl-2-diphospho-5'-guanosine, via the condensation of PEP with GTP. It is involved in the biosynthesis of coenzyme F420, a hydride carrier cofactor. In Frankia casuarinae (strain DSM 45818 / CECT 9043 / HFP020203 / CcI3), this protein is Phosphoenolpyruvate guanylyltransferase.